The chain runs to 195 residues: Imidazole glycerol phosphate synthase subunit HisH (195 aa).

Residues Met1–Gln193 form the Glutamine amidotransferase type-1 domain. Cys78 (nucleophile) is an active-site residue. Residues His168 and Glu170 contribute to the active site.

Heterodimer of HisH and HisF.

It localises to the cytoplasm. It carries out the reaction 5-[(5-phospho-1-deoxy-D-ribulos-1-ylimino)methylamino]-1-(5-phospho-beta-D-ribosyl)imidazole-4-carboxamide + L-glutamine = D-erythro-1-(imidazol-4-yl)glycerol 3-phosphate + 5-amino-1-(5-phospho-beta-D-ribosyl)imidazole-4-carboxamide + L-glutamate + H(+). The enzyme catalyses L-glutamine + H2O = L-glutamate + NH4(+). Its pathway is amino-acid biosynthesis; L-histidine biosynthesis; L-histidine from 5-phospho-alpha-D-ribose 1-diphosphate: step 5/9. Its function is as follows. IGPS catalyzes the conversion of PRFAR and glutamine to IGP, AICAR and glutamate. The HisH subunit catalyzes the hydrolysis of glutamine to glutamate and ammonia as part of the synthesis of IGP and AICAR. The resulting ammonia molecule is channeled to the active site of HisF. The sequence is that of Imidazole glycerol phosphate synthase subunit HisH from Exiguobacterium sibiricum (strain DSM 17290 / CCUG 55495 / CIP 109462 / JCM 13490 / 255-15).